The sequence spans 149 residues: D-aminoacyl-tRNA deacylase (149 aa).

A Gly-cisPro motif, important for rejection of L-amino acids motif is present at residues 137 to 138 (GP).

The protein belongs to the DTD family. Homodimer.

It is found in the cytoplasm. The enzyme catalyses glycyl-tRNA(Ala) + H2O = tRNA(Ala) + glycine + H(+). The catalysed reaction is a D-aminoacyl-tRNA + H2O = a tRNA + a D-alpha-amino acid + H(+). Its function is as follows. An aminoacyl-tRNA editing enzyme that deacylates mischarged D-aminoacyl-tRNAs. Also deacylates mischarged glycyl-tRNA(Ala), protecting cells against glycine mischarging by AlaRS. Acts via tRNA-based rather than protein-based catalysis; rejects L-amino acids rather than detecting D-amino acids in the active site. By recycling D-aminoacyl-tRNA to D-amino acids and free tRNA molecules, this enzyme counteracts the toxicity associated with the formation of D-aminoacyl-tRNA entities in vivo and helps enforce protein L-homochirality. The protein is D-aminoacyl-tRNA deacylase of Clostridium botulinum (strain Alaska E43 / Type E3).